The following is a 345-amino-acid chain: MRWKRTIQLLDVHAEGEIGRVAIGGVPKIPGETIAAQLHWLNTDPKGDELRRFLCLEPRGAPIGSVNLLLPARHPDADAAFIILQPDQAHASSGSNSICVTTALLESGIVEMQEPETIVTLETAAGLVKATATCRDGRCEKVKLTMVPSFVHELDVEIDTPHWGKIKADLCYGGIFYALVDVGQINLTIEKANAAGLVQAGMILKELINRDIKVVHPEIPAISGVAYVMFRDTEADGTVRTCTTMWPGRADRSPCGTGNSANLATLHARGKAKVGDVFTSKSIIGSEFEVGLQAVTEVAGRPAVIPTITGRGFTFGLTQVALDPFDPHPGGFALTDVWGPSAGEI.

Q85 provides a ligand contact to substrate. S93 serves as the catalytic Proton acceptor. Residues 94-95 and D251 each bind substrate; that span reads GS. C255 (proton donor) is an active-site residue. A substrate-binding site is contributed by 256–257; that stretch reads GT.

The protein belongs to the proline racemase family.

It carries out the reaction trans-4-hydroxy-L-proline = cis-4-hydroxy-D-proline. Catalyzes the epimerization of trans-4-hydroxy-L-proline (t4LHyp) to cis-4-hydroxy-D-proline (c4DHyp). May be involved in a degradation pathway of t4LHyp. Can also catalyze the epimerization of trans-3-hydroxy-L-proline (t3LHyp) to cis-3-hydroxy-D-proline (c3DHyp) in vitro, albeit with 2-fold lower efficiency. Displays no proline racemase activity. This chain is 4-hydroxyproline 2-epimerase, found in Rhizobium etli (strain ATCC 51251 / DSM 11541 / JCM 21823 / NBRC 15573 / CFN 42).